We begin with the raw amino-acid sequence, 173 residues long: Large ribosomal RNA subunit accumulation protein YceD (173 aa).

The protein belongs to the DUF177 domain family.

In terms of biological role, plays a role in synthesis, processing and/or stability of 23S rRNA. This is Large ribosomal RNA subunit accumulation protein YceD (yceD) from Escherichia coli O157:H7.